The primary structure comprises 512 residues: Methionine--tRNA ligase (512 aa).

The short motif at 12 to 22 (YYVNDVPHIGH) is the 'HIGH' region element. The 'KMSKS' region motif lies at 295 to 299 (KISKS). ATP is bound at residue lysine 298.

It belongs to the class-I aminoacyl-tRNA synthetase family. MetG type 2B subfamily. As to quaternary structure, monomer.

The protein localises to the cytoplasm. It catalyses the reaction tRNA(Met) + L-methionine + ATP = L-methionyl-tRNA(Met) + AMP + diphosphate. Its function is as follows. Is required not only for elongation of protein synthesis but also for the initiation of all mRNA translation through initiator tRNA(fMet) aminoacylation. This chain is Methionine--tRNA ligase, found in Rickettsia felis (strain ATCC VR-1525 / URRWXCal2) (Rickettsia azadi).